The following is a 416-amino-acid chain: PDZ and LIM domain protein 7 (416 aa).

A PDZ domain is found at 1–85; it reads MESYKVMLNG…RLCLTLSRAQ (85 aa). Disordered regions lie at residues 145–191 and 202–221; these read CTPQ…AVDP and TSTV…MQNR. Over residues 168–181 the composition is skewed to low complexity; the sequence is PGLAPRTPAATPGP. LIM zinc-binding domains follow at residues 239–297, 298–357, and 358–416; these read PLCY…TRYA, PSCA…MFGT, and KCRG…FSHV.

In terms of assembly, interacts with various PKC isoforms through the LIM zinc-binding domains. Interacts with TPM2. Interacts with TBX4 and TBX5.

It localises to the cytoplasm. The protein localises to the cytoskeleton. The protein resides in the myofibril. Its subcellular location is the sarcomere. It is found in the z line. In terms of biological role, may function as a scaffold on which the coordinated assembly of proteins can occur. May play a role as an adapter that, via its PDZ domain, localizes LIM-binding proteins to actin filaments of both skeletal muscle and nonmuscle tissues. May be involved in bone formation. This chain is PDZ and LIM domain protein 7 (PDLIM7), found in Gallus gallus (Chicken).